Reading from the N-terminus, the 120-residue chain is Flagellar protein FliT (120 aa).

Positions 1-50 (MERHQHLLSEYQQILTLSEQMLMLATVENWDALVDLEMAYLKAVENTANI) are required for homodimerization. The fliD binding stretch occupies residues 60 to 98 (LQELLRQKLRSILENEIEIKRLLQRRLDKLSELVGQSTR).

This sequence belongs to the FliT family. As to quaternary structure, homodimer. Interacts with FliD and FlhC.

The protein localises to the cytoplasm. Its subcellular location is the cytosol. In terms of biological role, dual-function protein that regulates the transcription of class 2 flagellar operons and that also acts as an export chaperone for the filament-capping protein FliD. As a transcriptional regulator, acts as an anti-FlhDC factor; it directly binds FlhC, thus inhibiting the binding of the FlhC/FlhD complex to class 2 promoters, resulting in decreased expression of class 2 flagellar operons. As a chaperone, effects FliD transition to the membrane by preventing its premature polymerization, and by directing it to the export apparatus. This is Flagellar protein FliT from Yersinia pseudotuberculosis serotype IB (strain PB1/+).